The primary structure comprises 736 residues: Elongation factor 2 (736 aa).

One can recognise a tr-type G domain in the interval 18–262 (TRVRNIGIIA…AVIKFVPNPV (245 aa)). GTP-binding positions include 27 to 34 (AHVDHGKT), 93 to 97 (DTPGH), and 147 to 150 (NKVD). At histidine 603 the chain carries Diphthamide.

It belongs to the TRAFAC class translation factor GTPase superfamily. Classic translation factor GTPase family. EF-G/EF-2 subfamily.

It is found in the cytoplasm. Catalyzes the GTP-dependent ribosomal translocation step during translation elongation. During this step, the ribosome changes from the pre-translocational (PRE) to the post-translocational (POST) state as the newly formed A-site-bound peptidyl-tRNA and P-site-bound deacylated tRNA move to the P and E sites, respectively. Catalyzes the coordinated movement of the two tRNA molecules, the mRNA and conformational changes in the ribosome. This is Elongation factor 2 from Metallosphaera sedula (strain ATCC 51363 / DSM 5348 / JCM 9185 / NBRC 15509 / TH2).